The sequence spans 716 residues: Fatty acid oxidation complex subunit alpha (716 aa).

The interval Met1–Ala189 is enoyl-CoA hydratase/isomerase. Asp296 contributes to the substrate binding site. The tract at residues Lys311 to Ala716 is 3-hydroxyacyl-CoA dehydrogenase. NAD(+) contacts are provided by residues Met324, Asp343, Val400–Glu402, Lys407, and Ser429. The active-site For 3-hydroxyacyl-CoA dehydrogenase activity is His450. Asn453 contacts NAD(+). Residues Asn500 and Tyr660 each contribute to the substrate site.

It in the N-terminal section; belongs to the enoyl-CoA hydratase/isomerase family. This sequence in the C-terminal section; belongs to the 3-hydroxyacyl-CoA dehydrogenase family. Heterotetramer of two alpha chains (FadB) and two beta chains (FadA).

It carries out the reaction a (3S)-3-hydroxyacyl-CoA + NAD(+) = a 3-oxoacyl-CoA + NADH + H(+). The enzyme catalyses a (3S)-3-hydroxyacyl-CoA = a (2E)-enoyl-CoA + H2O. The catalysed reaction is a 4-saturated-(3S)-3-hydroxyacyl-CoA = a (3E)-enoyl-CoA + H2O. It catalyses the reaction (3S)-3-hydroxybutanoyl-CoA = (3R)-3-hydroxybutanoyl-CoA. It carries out the reaction a (3Z)-enoyl-CoA = a 4-saturated (2E)-enoyl-CoA. The enzyme catalyses a (3E)-enoyl-CoA = a 4-saturated (2E)-enoyl-CoA. Its pathway is lipid metabolism; fatty acid beta-oxidation. In terms of biological role, involved in the aerobic and anaerobic degradation of long-chain fatty acids via beta-oxidation cycle. Catalyzes the formation of 3-oxoacyl-CoA from enoyl-CoA via L-3-hydroxyacyl-CoA. It can also use D-3-hydroxyacyl-CoA and cis-3-enoyl-CoA as substrate. This Shewanella putrefaciens (strain CN-32 / ATCC BAA-453) protein is Fatty acid oxidation complex subunit alpha.